We begin with the raw amino-acid sequence, 1501 residues long: Opaque-specific ABC transporter CDR3 (1501 aa).

Residues 1–502 (MAKTSQAEGQ…KRYWDRMRGD (502 aa)) are Cytoplasmic-facing. Residues 58-87 (TYTTATMHPNGINPISDKTDPTLDPESPSF) are disordered. The region spanning 140-395 (KYARNIFNKF…FKKMGFVCQD (256 aa)) is the ABC transporter 1 domain. The helical transmembrane segment at 503–523 (IIVPLSTVAGNIAMALILSSV) threads the bilayer. An N-linked (GlcNAc...) asparagine glycan is attached at Asn-530. 5 consecutive transmembrane segments (helical) span residues 540-560 (VMYYALLFNAYSSVLEIYNMY), 589-609 (FPLKVVCSVLFNLILYFMVNF), 614-634 (GAFFFYLLISFCSTLFMSHLF), 653-673 (LLLFALSTFSGFAIPVTYMLG), and 755-775 (FGVLMAFIIFLFGTTIFFVQT). At 776-1175 (NKSSISKGET…LFQQYWRTPS (400 aa)) the chain is on the cytoplasmic side. The region spanning 840 to 1083 (FHWRNLTYTV…LIEYFERNGA (244 aa)) is the ABC transporter 2 domain. Position 876-883 (876-883 (GASGAGKT)) interacts with ATP. 7 helical membrane passes run 1176–1196 (YIYSKFAMAVLCSLFNGFTYY), 1212–1232 (IFSMFVVLTTLAQQYVPLFVT), 1261–1281 (IPYQVLAATISFFSWYYPVGL), 1297–1317 (LMWLIMTLMFIYSSTLAQFCI), 1325–1345 (YAANWISLLLTISMIFCGVIA), 1353–1375 (FWVFLYRCTPLTYLTSAMMSIGL), and 1451–1471 (GIFIVFIVFNMAATVFSYWLF).

Belongs to the ABC transporter superfamily. ABCG family. PDR (TC 3.A.1.205) subfamily.

The protein localises to the membrane. This Candida albicans (Yeast) protein is Opaque-specific ABC transporter CDR3 (CDR3).